Consider the following 233-residue polypeptide: Biosynthetic peptidoglycan transglycosylase (233 aa).

The helical transmembrane segment at 17-37 (IVLAVLALVVLPYVLIFFYLL) threads the bilayer.

Belongs to the glycosyltransferase 51 family.

The protein resides in the cell inner membrane. The catalysed reaction is [GlcNAc-(1-&gt;4)-Mur2Ac(oyl-L-Ala-gamma-D-Glu-L-Lys-D-Ala-D-Ala)](n)-di-trans,octa-cis-undecaprenyl diphosphate + beta-D-GlcNAc-(1-&gt;4)-Mur2Ac(oyl-L-Ala-gamma-D-Glu-L-Lys-D-Ala-D-Ala)-di-trans,octa-cis-undecaprenyl diphosphate = [GlcNAc-(1-&gt;4)-Mur2Ac(oyl-L-Ala-gamma-D-Glu-L-Lys-D-Ala-D-Ala)](n+1)-di-trans,octa-cis-undecaprenyl diphosphate + di-trans,octa-cis-undecaprenyl diphosphate + H(+). Its pathway is cell wall biogenesis; peptidoglycan biosynthesis. Functionally, peptidoglycan polymerase that catalyzes glycan chain elongation from lipid-linked precursors. This chain is Biosynthetic peptidoglycan transglycosylase, found in Rhizobium etli (strain ATCC 51251 / DSM 11541 / JCM 21823 / NBRC 15573 / CFN 42).